A 322-amino-acid chain; its full sequence is Mycothiol acetyltransferase (322 aa).

N-acetyltransferase domains follow at residues 5–150 (SWLR…DPDD) and 160–322 (VTIR…PARG). Glutamate 36 is a 1D-myo-inositol 2-(L-cysteinylamino)-2-deoxy-alpha-D-glucopyranoside binding site. Acetyl-CoA-binding positions include 79–81 (LVV) and 87–92 (RRGVGT). Residues glutamate 187, lysine 226, and glutamate 252 each contribute to the 1D-myo-inositol 2-(L-cysteinylamino)-2-deoxy-alpha-D-glucopyranoside site. 256–258 (VGV) contacts acetyl-CoA. Tyrosine 290 is a binding site for 1D-myo-inositol 2-(L-cysteinylamino)-2-deoxy-alpha-D-glucopyranoside. Residue 295–300 (NARAVR) coordinates acetyl-CoA.

Belongs to the acetyltransferase family. MshD subfamily. As to quaternary structure, monomer.

It catalyses the reaction 1D-myo-inositol 2-(L-cysteinylamino)-2-deoxy-alpha-D-glucopyranoside + acetyl-CoA = mycothiol + CoA + H(+). Catalyzes the transfer of acetyl from acetyl-CoA to desacetylmycothiol (Cys-GlcN-Ins) to form mycothiol. This Parafrankia sp. (strain EAN1pec) protein is Mycothiol acetyltransferase.